A 483-amino-acid chain; its full sequence is Cobyric acid synthase (483 aa).

Positions Ala-251–Phe-438 constitute a GATase cobBQ-type domain. The active-site Nucleophile is Cys-333. His-430 is an active-site residue.

Belongs to the CobB/CobQ family. CobQ subfamily.

The protein operates within cofactor biosynthesis; adenosylcobalamin biosynthesis. Catalyzes amidations at positions B, D, E, and G on adenosylcobyrinic A,C-diamide. NH(2) groups are provided by glutamine, and one molecule of ATP is hydrogenolyzed for each amidation. The polypeptide is Cobyric acid synthase (Brucella suis biovar 1 (strain 1330)).